The chain runs to 207 residues: Large ribosomal subunit protein bL9 (207 aa).

Over residues 162 to 176 (QKKEEKAKDEVSATE) the composition is skewed to basic and acidic residues. Residues 162 to 207 (QKKEEKAKDEVSATEKDEELMLSSVTNDNDGDGAKEIVVEGTEESQ) form a disordered region.

It belongs to the bacterial ribosomal protein bL9 family.

Functionally, binds to the 23S rRNA. The protein is Large ribosomal subunit protein bL9 of Ehrlichia ruminantium (strain Gardel).